Consider the following 704-residue polypeptide: Metabotropic glutamate receptor-like protein K (704 aa).

An N-terminal signal peptide occupies residues 1–21 (MIKLILSIILIICFIINSIES). The Extracellular portion of the chain corresponds to 22 to 383 (FKMITLTTGP…SKVEFQRSIQ (362 aa)). Residues Asn-66, Asn-104, Asn-256, Asn-286, Asn-308, Asn-337, Asn-343, and Asn-368 are each glycosylated (N-linked (GlcNAc...) asparagine). Residues 384–404 (IGFSIVSGLLIGFVILMMIGI) traverse the membrane as a helical segment. The Cytoplasmic portion of the chain corresponds to 405-419 (VKYQDTPSIRSASPS). A helical membrane pass occupies residues 420 to 440 (FLNLTLLGGVIIFIGIIVWVA). Residues 441 to 455 (PISTHQCNARFWLVT) lie on the Extracellular side of the membrane. A helical transmembrane segment spans residues 456-476 (IGFSTLIGSLVVKNIRIWLIF). The Cytoplasmic portion of the chain corresponds to 477-492 (DNPELKIRTITNNQLY). A helical membrane pass occupies residues 493-513 (PWVGLCLVINIVLMSIITTVG). Residues 514–541 (DLKAIEAQGIDSLGKFEYMTICKMNYTG) are Extracellular-facing. A glycan (N-linked (GlcNAc...) asparagine) is linked at Asn-538. The helical transmembrane segment at 542 to 562 (AATLYSILAYFGTLLLVGVFV) threads the bilayer. Residues 563–578 (SWKIRIVHIEEFSECT) lie on the Cytoplasmic side of the membrane. The helical transmembrane segment at 579–599 (AIAKTLYSISFCLFVIVPLMI) threads the bilayer. Residues 600-608 (SPQDKQSET) are Extracellular-facing. A helical membrane pass occupies residues 609 to 629 (IILCVTGIFITTGALLIFFLP). Residues 630–704 (KFWRIFGNEK…NESSLSNETK (75 aa)) lie on the Cytoplasmic side of the membrane. Disordered regions lie at residues 657–677 (ARAE…SKSS) and 685–704 (SGIE…NETK).

In the N-terminal section; belongs to the BMP lipoprotein family. This sequence in the C-terminal section; belongs to the G-protein coupled receptor 3 family. GABA-B receptor subfamily.

The protein resides in the membrane. This chain is Metabotropic glutamate receptor-like protein K (grlK), found in Dictyostelium discoideum (Social amoeba).